The chain runs to 441 residues: UDP-N-acetylglucosamine--N-acetylmuramyl-(pentapeptide) pyrophosphoryl-undecaprenol N-acetylglucosamine transferase (441 aa).

Residues 28–30 (TGG), Asn-140, Arg-176, Ser-204, Ile-257, and Gln-302 contribute to the UDP-N-acetyl-alpha-D-glucosamine site.

It belongs to the glycosyltransferase 28 family. MurG subfamily.

The protein localises to the cell inner membrane. The enzyme catalyses di-trans,octa-cis-undecaprenyl diphospho-N-acetyl-alpha-D-muramoyl-L-alanyl-D-glutamyl-meso-2,6-diaminopimeloyl-D-alanyl-D-alanine + UDP-N-acetyl-alpha-D-glucosamine = di-trans,octa-cis-undecaprenyl diphospho-[N-acetyl-alpha-D-glucosaminyl-(1-&gt;4)]-N-acetyl-alpha-D-muramoyl-L-alanyl-D-glutamyl-meso-2,6-diaminopimeloyl-D-alanyl-D-alanine + UDP + H(+). It participates in cell wall biogenesis; peptidoglycan biosynthesis. Cell wall formation. Catalyzes the transfer of a GlcNAc subunit on undecaprenyl-pyrophosphoryl-MurNAc-pentapeptide (lipid intermediate I) to form undecaprenyl-pyrophosphoryl-MurNAc-(pentapeptide)GlcNAc (lipid intermediate II). This Xanthomonas oryzae pv. oryzae (strain KACC10331 / KXO85) protein is UDP-N-acetylglucosamine--N-acetylmuramyl-(pentapeptide) pyrophosphoryl-undecaprenol N-acetylglucosamine transferase.